Consider the following 437-residue polypeptide: Enolase-related protein 1 (437 aa).

Residues H160 and E169 each coordinate substrate. The Proton donor role is filled by E212. Residues D247, E296, and D321 each contribute to the Mg(2+) site. Residues E296 and D321 each coordinate substrate. The Proton acceptor role is filled by K346. Residues 373–376 and K397 contribute to the substrate site; that span reads SHRS.

The protein belongs to the enolase family. The cofactor is Mg(2+).

It catalyses the reaction (2R)-2-phosphoglycerate = phosphoenolpyruvate + H2O. The protein operates within carbohydrate degradation; glycolysis; pyruvate from D-glyceraldehyde 3-phosphate: step 4/5. The chain is Enolase-related protein 1 (ERR1) from Saccharomyces cerevisiae (strain ATCC 204508 / S288c) (Baker's yeast).